The following is a 176-amino-acid chain: Transmembrane protein 238 (176 aa).

The segment at 1–22 (MAAAPAVCASQGSPPGAPSAPA) is disordered. Residues 1 to 36 (MAAAPAVCASQGSPPGAPSAPAAAPAPAAGLGRCRM) lie on the Cytoplasmic side of the membrane. The segment covering 9–22 (ASQGSPPGAPSAPA) has biased composition (low complexity). Residues 37–57 (ALLLAVALDVAGMAALLTGVF) form a helical membrane-spanning segment. The Extracellular segment spans residues 58 to 69 (AQLQVRGRDFGD). The helical transmembrane segment at 70 to 90 (LLIYSGALLVFLSLLGWILWY) threads the bilayer. Topologically, residues 91 to 176 (TGNIEISRQE…GPGAAGAGSE (86 aa)) are cytoplasmic. The segment covering 124–137 (SAPAAAGQRPAPGS) has biased composition (low complexity). The segment at 124–157 (SAPAAAGQRPAPGSRRARRAARAPPPPAAGSRRV) is disordered. The residue at position 175 (S175) is a Phosphoserine.

The protein resides in the membrane. The protein is Transmembrane protein 238 (TMEM238) of Homo sapiens (Human).